Here is an 806-residue protein sequence, read N- to C-terminus: Phenylalanine--tRNA ligase beta subunit (806 aa).

The 116-residue stretch at 39–154 (SAGLKKIVVG…EAIAPGTDVY (116 aa)) folds into the tRNA-binding domain. The B5 domain maps to 410–485 (PQPKVIQFDS…RLYGYDNLPS (76 aa)). Mg(2+)-binding residues include aspartate 463, aspartate 469, glutamate 472, and glutamate 473. One can recognise an FDX-ACB domain in the interval 713–806 (PKFPEVTRDI…LVATFQAKVR (94 aa)).

Belongs to the phenylalanyl-tRNA synthetase beta subunit family. Type 1 subfamily. In terms of assembly, tetramer of two alpha and two beta subunits. Mg(2+) is required as a cofactor.

Its subcellular location is the cytoplasm. It catalyses the reaction tRNA(Phe) + L-phenylalanine + ATP = L-phenylalanyl-tRNA(Phe) + AMP + diphosphate + H(+). This is Phenylalanine--tRNA ligase beta subunit from Latilactobacillus sakei subsp. sakei (strain 23K) (Lactobacillus sakei subsp. sakei).